The sequence spans 186 residues: Lipid A acyltransferase PagP (186 aa).

The first 25 residues, Met-1–Ala-25, serve as a signal peptide directing secretion. Residues His-58, Asp-101, and Ser-102 contribute to the active site.

Belongs to the lipid A palmitoyltransferase family. Homodimer.

It is found in the cell outer membrane. The catalysed reaction is a lipid A + a 1,2-diacyl-sn-glycero-3-phosphocholine = a hepta-acyl lipid A + a 2-acyl-sn-glycero-3-phosphocholine. The enzyme catalyses a lipid IVA + a 1,2-diacyl-sn-glycero-3-phosphocholine = a lipid IVB + a 2-acyl-sn-glycero-3-phosphocholine. It catalyses the reaction a lipid IIA + a 1,2-diacyl-sn-glycero-3-phosphocholine = a lipid IIB + a 2-acyl-sn-glycero-3-phosphocholine. Its function is as follows. Transfers a fatty acid residue from the sn-1 position of a phospholipid to the N-linked hydroxyfatty acid chain on the proximal unit of lipid A or its precursors. The protein is Lipid A acyltransferase PagP of Shigella flexneri serotype X (strain 2002017).